A 221-amino-acid polypeptide reads, in one-letter code: Iron-sulfur cluster repair protein YtfE (221 aa).

Belongs to the RIC family. YtfE subfamily. As to quaternary structure, homodimer.

It localises to the cytoplasm. Its function is as follows. Di-iron-containing protein involved in the repair of iron-sulfur clusters damaged by oxidative and nitrosative stress conditions. The sequence is that of Iron-sulfur cluster repair protein YtfE from Pectobacterium atrosepticum (strain SCRI 1043 / ATCC BAA-672) (Erwinia carotovora subsp. atroseptica).